Reading from the N-terminus, the 461-residue chain is tRNA modification GTPase MnmE (461 aa).

Residues arginine 23, glutamate 88, and arginine 127 each coordinate (6S)-5-formyl-5,6,7,8-tetrahydrofolate. A TrmE-type G domain is found at 223 to 383 (GLNTVIVGKP…LKECIKNLFF (161 aa)). Position 233 (asparagine 233) interacts with K(+). GTP-binding positions include 233-238 (NVGKSS), 252-258 (TEIPGTT), and 277-280 (DTAG). Mg(2+) is bound at residue serine 237. Threonine 252, isoleucine 254, and threonine 257 together coordinate K(+). Threonine 258 lines the Mg(2+) pocket. A (6S)-5-formyl-5,6,7,8-tetrahydrofolate-binding site is contributed by lysine 461.

It belongs to the TRAFAC class TrmE-Era-EngA-EngB-Septin-like GTPase superfamily. TrmE GTPase family. As to quaternary structure, homodimer. Heterotetramer of two MnmE and two MnmG subunits. The cofactor is K(+).

Its subcellular location is the cytoplasm. Functionally, exhibits a very high intrinsic GTPase hydrolysis rate. Involved in the addition of a carboxymethylaminomethyl (cmnm) group at the wobble position (U34) of certain tRNAs, forming tRNA-cmnm(5)s(2)U34. In Clostridium botulinum (strain Loch Maree / Type A3), this protein is tRNA modification GTPase MnmE.